The chain runs to 337 residues: MRVLGIETSCDETGIAIYDDENGLLANQLYSQVKLHADYGGVVPELASRDHVRKTVPLIQAAIKEAGLTAKDIDAVAYTAGPGLVGALLVGATVGRALAFAWDVPAVPVHHMEGHLLAPMLEDNPPEFPFVALLVSGGHTQLISVTGIGQYELLGESIDDAAGEAFDKTAKLLGLDYPGGPMLSKMAAQGTAGRFTFPRPMTDRPGLDFSFSGLKTFAANTIRDNGTDDQTRADIARAFEDAVVDTLMIKCRRALDQTGFKRLVMAGGVSANRTLRARLAEMMQKRGGEVFYARPEFCTDNGAMIAYAGMVRLKAKGEAGLGVTVRPRWPLSELPAA.

The Fe cation site is built by H111 and H115. Substrate-binding positions include 134–138, D167, G180, and N272; that span reads LVSGG. D300 contributes to the Fe cation binding site.

The protein belongs to the KAE1 / TsaD family. It depends on Fe(2+) as a cofactor.

Its subcellular location is the cytoplasm. The catalysed reaction is L-threonylcarbamoyladenylate + adenosine(37) in tRNA = N(6)-L-threonylcarbamoyladenosine(37) in tRNA + AMP + H(+). Required for the formation of a threonylcarbamoyl group on adenosine at position 37 (t(6)A37) in tRNAs that read codons beginning with adenine. Is involved in the transfer of the threonylcarbamoyl moiety of threonylcarbamoyl-AMP (TC-AMP) to the N6 group of A37, together with TsaE and TsaB. TsaD likely plays a direct catalytic role in this reaction. The chain is tRNA N6-adenosine threonylcarbamoyltransferase from Cronobacter sakazakii (strain ATCC BAA-894) (Enterobacter sakazakii).